Here is a 145-residue protein sequence, read N- to C-terminus: Basic phospholipase A2 cPm08 (145 aa).

The N-terminal stretch at 1-21 is a signal peptide; sequence MYPAHLLVLLAVCVSLLGASA. A propeptide spanning residues 22-27 is cleaved from the precursor; the sequence is IPPLPL. Disulfide bonds link cysteine 38/cysteine 98, cysteine 54/cysteine 144, cysteine 56/cysteine 72, cysteine 71/cysteine 125, cysteine 78/cysteine 118, cysteine 87/cysteine 111, and cysteine 105/cysteine 116. Ca(2+) contacts are provided by tyrosine 55, glycine 57, and glycine 59. Histidine 75 is an active-site residue. Aspartate 76 contacts Ca(2+). Aspartate 119 is a catalytic residue.

This sequence belongs to the phospholipase A2 family. Group I subfamily. D49 sub-subfamily. The cofactor is Ca(2+). In terms of tissue distribution, expressed by the venom gland.

It is found in the secreted. The catalysed reaction is a 1,2-diacyl-sn-glycero-3-phosphocholine + H2O = a 1-acyl-sn-glycero-3-phosphocholine + a fatty acid + H(+). Functionally, PLA2 catalyzes the calcium-dependent hydrolysis of the 2-acyl groups in 3-sn-phosphoglycerides. This is Basic phospholipase A2 cPm08 from Laticauda semifasciata (Black-banded sea krait).